A 71-amino-acid chain; its full sequence is Antitoxin VapB22 (71 aa).

The protein belongs to the phD/YefM antitoxin family.

Functionally, antitoxin component of a type II toxin-antitoxin (TA) system. Upon expression in M.smegmatis neutralizes the effect of cognate toxin VapC22. The chain is Antitoxin VapB22 (vapB22) from Mycobacterium tuberculosis (strain ATCC 25618 / H37Rv).